Here is a 249-residue protein sequence, read N- to C-terminus: 3alpha-hydroxy bile acid-CoA-ester 3-dehydrogenase 2 (249 aa).

NAD(+)-binding positions include T15–I18, E38, E42, and N92. S144 provides a ligand contact to substrate. Residues Y157 and K161 each act as proton donor/acceptor in the active site. Residues K161 and V190 to T192 each bind NAD(+).

Belongs to the short-chain dehydrogenases/reductases (SDR) family. In terms of assembly, homotetramer.

The enzyme catalyses a 3alpha-hydroxy bile acid CoA + NAD(+) = a 3-oxo bile acid CoA + NADH + H(+). The catalysed reaction is choloyl-CoA + NAD(+) = 7alpha,12alpha-dihydroxy-3-oxochol-24-oyl-CoA + NADH + H(+). It carries out the reaction chenodeoxycholoyl-CoA + NAD(+) = 7alpha-hydroxy-3-oxochol-24-oyl-CoA + NADH + H(+). It catalyses the reaction deoxycholoyl-CoA + NAD(+) = 12alpha-hydroxy-3-oxocholan-24-oyl-CoA + NADH + H(+). The enzyme catalyses lithocholoyl-CoA + NAD(+) = 3-oxocholan-24-oyl-CoA + NADH + H(+). It participates in lipid metabolism; bile acid biosynthesis. Involved in the multi-step bile acid 7alpha-dehydroxylation pathway that transforms primary bile acids to secondary bile acids in the human gut. Catalyzes the oxidation of C3-hydroxyl group of CoA conjugated bile acids generating a C3-oxo bile acid intermediate. Can use choloyl-CoA, chenodeoxycholoyl-CoA, deoxycholoyl-CoA, and lithocholoyl-CoA as substrates with similar efficiency. Highly prefers NAD over NADP as cosubstrate. Also catalyzes the reverse reactions; in vitro, the preferred direction of reaction depends on the pH. Has very little activity with unconjugated (non-CoA) bile acid substrates. The protein is 3alpha-hydroxy bile acid-CoA-ester 3-dehydrogenase 2 (baiA2) of Clostridium scindens (strain JCM 10418 / VPI 12708).